The primary structure comprises 373 residues: MEISYYEILEITQNADKETIKKAYRKMALKYHPDRNQGDKEAEDKFKLVNEAYEVLSNDEKRAIYDRYGKDALKGGGFGSSSSGFGGFEDLGDIFSSFFGEGFGSSRRRKSSNDEKIPSDFIVNLKLSFKEAVFGCKKNIDFTYKCSCKTCNGTGAKDGKLQTCPKCQGRGQVGVSQGFITFAQTCPDCQGIGEKASEKCSDCKGLGYNESKDSVELNIPEGVDTGMKLRVNAKGNILKNGTRGDMYVKIIAAEDDTFIRDDDDIYIEFPVFFTQAILGESIKVPTIRGEATLNLPKGAKDGQRFVLEKEGVKDVHSSRMGNQIVQISIKFPTSLNDEQKELLEKLSESFGIKDGMHQEQKGLFEKITNWFKS.

The J domain occupies 4-69 (SYYEILEITQ…EKRAIYDRYG (66 aa)). The CR-type zinc-finger motif lies at 135–212 (GCKKNIDFTY…CKGLGYNESK (78 aa)). Zn(2+)-binding residues include C148, C151, C164, C167, C186, C189, C200, and C203. CXXCXGXG motif repeat units follow at residues 148–155 (CKTCNGTG), 164–171 (CPKCQGRG), 186–193 (CPDCQGIG), and 200–207 (CSDCKGLG).

The protein belongs to the DnaJ family. In terms of assembly, homodimer. It depends on Zn(2+) as a cofactor.

The protein localises to the cytoplasm. Participates actively in the response to hyperosmotic and heat shock by preventing the aggregation of stress-denatured proteins and by disaggregating proteins, also in an autonomous, DnaK-independent fashion. Unfolded proteins bind initially to DnaJ; upon interaction with the DnaJ-bound protein, DnaK hydrolyzes its bound ATP, resulting in the formation of a stable complex. GrpE releases ADP from DnaK; ATP binding to DnaK triggers the release of the substrate protein, thus completing the reaction cycle. Several rounds of ATP-dependent interactions between DnaJ, DnaK and GrpE are required for fully efficient folding. Also involved, together with DnaK and GrpE, in the DNA replication of plasmids through activation of initiation proteins. This is Chaperone protein DnaJ from Campylobacter jejuni subsp. jejuni serotype O:2 (strain ATCC 700819 / NCTC 11168).